We begin with the raw amino-acid sequence, 210 residues long: Kalata-B2 (210 aa).

The N-terminal stretch at 1 to 22 (MAKFTNCLVLSLLLAAFVGAFG) is a signal peptide. The propeptide occupies 23-66 (AEFSEADKATLVNDIAENIQKEILGEVKTSETVLTMFLKEMQLK). A cross-link (cyclopeptide (Gly-Asp)) is located at residues 67–95 (GLPVCGETCFGGTCNTPGCSCTWPICTRD). Intrachain disulfides connect Cys-71–Cys-85, Cys-75–Cys-87, and Cys-80–Cys-92. The propeptide occupies 96–120 (SLPMRAGGKTSETTLHMFLKEMQLK). The cyclopeptide (Gly-Asp) cross-link spans 121 to 149 (GLPVCGETCFGGTCNTPGCSCTWPICTRD). Disulfide bonds link Cys-125–Cys-139, Cys-129–Cys-141, and Cys-134–Cys-146. The propeptide occupies 150 to 174 (SLPMSAGGKTSETTLHMFLKEMQLK). Positions 175–203 (GLPVCGETCFGGTCNTPGCSCTWPICTRD) form a cross-link, cyclopeptide (Gly-Asp). Cystine bridges form between Cys-179–Cys-193, Cys-183–Cys-195, and Cys-188–Cys-200. Positions 204 to 210 (SLPLVAA) are excised as a propeptide.

This sequence belongs to the cyclotide family. Moebius subfamily. Post-translationally, kalata-B2 is a cyclic peptide which occurs in three forms: with unmodified Trp, with Trp oxidized to form N-formylkynurenine and with Trp oxidized to form kynurenine. Oxidation is enhanced by exposure to sunlight.

Probably participates in a plant defense mechanism. Inhibitory effect on the growth and development of larvae from Helicoverpa punctigera. Has hemolytic activity. The polypeptide is Kalata-B2 (OAK4) (Oldenlandia affinis).